We begin with the raw amino-acid sequence, 261 residues long: Probable enoyl-CoA hydratase EchA17 (261 aa).

Belongs to the enoyl-CoA hydratase/isomerase family.

It carries out the reaction a (3S)-3-hydroxyacyl-CoA = a (2E)-enoyl-CoA + H2O. The catalysed reaction is a 4-saturated-(3S)-3-hydroxyacyl-CoA = a (3E)-enoyl-CoA + H2O. Its function is as follows. Could possibly oxidize fatty acids using specific components. This chain is Probable enoyl-CoA hydratase EchA17 (echA17), found in Mycobacterium bovis (strain BCG / Pasteur 1173P2).